A 261-amino-acid polypeptide reads, in one-letter code: Monopolin complex subunit pcs1 (261 aa).

A disordered region spans residues 1–42 (MRKNNMQTSKDSELKEQAKGKSSKLIHKLPKQRTRISQGQMH). Residues 10–19 (KDSELKEQAK) show a composition bias toward basic and acidic residues. A compositionally biased stretch (basic residues) spans 21 to 34 (KSSKLIHKLPKQRT). Residues 91–170 (HTQEQEFNEL…EQIKNYSKIN (80 aa)) are a coiled coil.

As to quaternary structure, component of a monopolin-like complex composed of pcs1 and mde4. The complex associates with the kinetochore.

It is found in the nucleus. The protein resides in the nucleolus. The protein localises to the chromosome. It localises to the centromere. Functionally, the monopolin-like pcs1/mde4 complex is essential for accurate chromosome segregation during mitosis and meiosis II. May clamp together microtubule binding sites on the same kinetochore, preventing merotelic attachment of microtubules. In contrast to its S.cerevisiae ortholog CSM1, is not required ofr mono-orientation during meiosis I. This Schizosaccharomyces pombe (strain 972 / ATCC 24843) (Fission yeast) protein is Monopolin complex subunit pcs1 (pcs1).